Consider the following 1064-residue polypeptide: mRNA 3'-end-processing protein RNA14 (1064 aa).

Disordered stretches follow at residues 34 to 106 and 119 to 192; these read ASQS…APSA and SETP…ASAV. Residues 44-54 are compositionally biased toward polar residues; it reads AQDQKSHSTLL. Low complexity-rich tracts occupy residues 66–86 and 151–191; these read SAIP…AIGD and QPAE…AASA. HAT repeat units lie at residues 327-364, 377-412, 423-456, 673-706, and 777-811; these read SNFA…YIRR, DVRS…FVAS, AKND…FESS, QRGA…FARR, and NDDN…YEYT. 2 disordered regions span residues 888-985 and 1022-1064; these read AVPT…DRSG and LPGA…SGRY. Basic and acidic residues-rich tracts occupy residues 899–910 and 933–948; these read SYKRPAPEDIPP and RYPE…RYRD. A compositionally biased stretch (pro residues) spans 1026-1042; sequence GMPPAPPISRGPPPPPM.

The protein localises to the nucleus. Its subcellular location is the cytoplasm. Component of the cleavage factor IA (CFIA) complex, which is involved in the endonucleolytic cleavage during polyadenylation-dependent pre-mRNA 3'-end formation. This is mRNA 3'-end-processing protein RNA14 (RNA14) from Cryptococcus neoformans var. neoformans serotype D (strain B-3501A) (Filobasidiella neoformans).